The following is a 217-amino-acid chain: D-methionine transport system permease protein MetI (217 aa).

The Periplasmic portion of the chain corresponds to 1-19 (MSEAMMWLLVRGVWETLAM). The region spanning 13 to 204 (VWETLAMTFV…LLVVLVYLIQ (192 aa)) is the ABC transmembrane type-1 domain. Residues 20 to 40 (TFVSGFFGFVIGLPVGVLLYV) traverse the membrane as a helical segment. The Cytoplasmic segment spans residues 41-67 (TRPGQIMENARLYRSLSAVVNIFRSIP). A helical transmembrane segment spans residues 68-88 (FIILLVWMIPFTRIIVGTSIG). Residues 89 to 92 (LQAA) are Periplasmic-facing. The helical transmembrane segment at 93–113 (IVPLTVGAAPFIARIVENALL) threads the bilayer. Residues 114–151 (EIPAGLIEASRAMGATPLQIVRKILLPEALPGLVNAAT) are Cytoplasmic-facing. Residues 152 to 172 (ITLITLVGYSAMGGAVGAGGL) form a helical membrane-spanning segment. Over 173 to 185 (GQIGYQYGYIGYN) the chain is Periplasmic. The helical transmembrane segment at 186–206 (ATVMNTVLVLLVVLVYLIQLS) threads the bilayer. The Cytoplasmic segment spans residues 207-217 (GDRIVRAVTHK).

This sequence belongs to the binding-protein-dependent transport system permease family. CysTW subfamily.

Its subcellular location is the cell inner membrane. Functionally, part of the binding-protein-dependent transport system for D-methionine and the toxic methionine analog alpha-methyl-methionine. Probably responsible for the translocation of the substrate across the membrane. This is D-methionine transport system permease protein MetI (metI) from Salmonella typhi.